Reading from the N-terminus, the 193-residue chain is Imidazoleglycerol-phosphate dehydratase (193 aa).

The protein belongs to the imidazoleglycerol-phosphate dehydratase family.

Its subcellular location is the cytoplasm. The catalysed reaction is D-erythro-1-(imidazol-4-yl)glycerol 3-phosphate = 3-(imidazol-4-yl)-2-oxopropyl phosphate + H2O. The protein operates within amino-acid biosynthesis; L-histidine biosynthesis; L-histidine from 5-phospho-alpha-D-ribose 1-diphosphate: step 6/9. This Methanoculleus marisnigri (strain ATCC 35101 / DSM 1498 / JR1) protein is Imidazoleglycerol-phosphate dehydratase.